The chain runs to 272 residues: 3-methyl-2-oxobutanoate hydroxymethyltransferase (272 aa).

Residues Asp43 and Asp82 each contribute to the Mg(2+) site. 3-methyl-2-oxobutanoate contacts are provided by residues 43 to 44, Asp82, and Lys112; that span reads DS. Glu114 contributes to the Mg(2+) binding site. The Proton acceptor role is filled by Glu179.

The protein belongs to the PanB family. Homodecamer; pentamer of dimers. The cofactor is Mg(2+).

The protein resides in the cytoplasm. It carries out the reaction 3-methyl-2-oxobutanoate + (6R)-5,10-methylene-5,6,7,8-tetrahydrofolate + H2O = 2-dehydropantoate + (6S)-5,6,7,8-tetrahydrofolate. It functions in the pathway cofactor biosynthesis; (R)-pantothenate biosynthesis; (R)-pantoate from 3-methyl-2-oxobutanoate: step 1/2. In terms of biological role, catalyzes the reversible reaction in which hydroxymethyl group from 5,10-methylenetetrahydrofolate is transferred onto alpha-ketoisovalerate to form ketopantoate. The sequence is that of 3-methyl-2-oxobutanoate hydroxymethyltransferase from Staphylococcus aureus (strain Mu3 / ATCC 700698).